A 146-amino-acid polypeptide reads, in one-letter code: Hemoglobin subunit beta-2 (146 aa).

Residues glutamate 2 to histidine 146 form the Globin domain. Heme b-binding residues include histidine 63 and histidine 92.

The protein belongs to the globin family. Hb3 is a heterotetramer of two alpha-2 chains and two beta-2 chains. In terms of tissue distribution, red blood cells.

In terms of biological role, involved in oxygen transport from gills to the various peripheral tissues. The chain is Hemoglobin subunit beta-2 (hbb2) from Anarhichas minor (Arctic spotted wolffish).